The following is a 459-amino-acid chain: Serine protease HTRA3 (459 aa).

The first 23 residues, 1–23 (MQARALLPATLAILATLAVLALA), serve as a signal peptide directing secretion. Residues 27–90 (PAAPCPARCD…ECVRGVCRCR (64 aa)) form the IGFBP N-terminal domain. Disulfide bonds link Cys31/Cys54, Cys35/Cys56, Cys40/Cys57, Cys45/Cys60, Cys68/Cys82, Cys76/Cys87, Cys89/Cys107, and Cys96/Cys132. Positions 76–134 (CGDSLECVRGVCRCRWTHTVCGTDGHTYADVCALQAASRRALQVSGTPVRQLQKGACPS) constitute a Kazal-like domain. Residues 181-347 (GSGFIMSEAG…IPSDRITRFL (167 aa)) are serine protease. Catalysis depends on charge relay system residues His197, Asp233, and Ser311. A PDZ domain is found at 365-450 (IRMRTITPSL…EVRRGNDDLL (86 aa)).

Belongs to the peptidase S1C family. Homotrimer. Interacts with MYH9. Interacts with TGFB1; the interaction inhibits TGFB-mediated signaling. Interacts with BMP4; the interaction inhibits BMP4-mediated signaling. Interacts with TGFB2 and GDF5. As to expression, highest level of isoform 1 in maternal part of the placenta, moderate level in heart, testis and ovary, low level in muscle and lung. High expression found in granulosa cells of the ovary. Expressed in bone matrix, particularly in articular chondrocytes. Very low level of isoform 2 expressed in placenta. Expressed in the bone matrix, particularly in articular chondrocytes.

Its subcellular location is the secreted. In terms of biological role, serine protease that cleaves beta-casein/CSN2 as well as several extracellular matrix (ECM) proteoglycans such as decorin/DCN, biglycan/BGN and fibronectin/FN1. Inhibits signaling mediated by TGF-beta family proteins possibly indirectly by degradation of these ECM proteoglycans. May act as a tumor suppressor. Negatively regulates, in vitro, trophoblast invasion during placental development and may be involved in the development of the placenta in vivo. May also have a role in ovarian development, granulosa cell differentiation and luteinization. The chain is Serine protease HTRA3 (Htra3) from Mus musculus (Mouse).